Here is an 886-residue protein sequence, read N- to C-terminus: UPF0592 membrane protein C7D4.03c (886 aa).

The disordered stretch occupies residues 87-112 (ILNEPYNESPSSSSSDSSSRSTSPFS). The segment covering 95-112 (SPSSSSSDSSSRSTSPFS) has biased composition (low complexity). 3 helical membrane-spanning segments follow: residues 277–297 (FCAS…DHFL), 374–394 (GGFF…QFSF), and 400–420 (VIYF…LTIS).

Belongs to the UPF0592 family.

It localises to the membrane. The polypeptide is UPF0592 membrane protein C7D4.03c (Schizosaccharomyces pombe (strain 972 / ATCC 24843) (Fission yeast)).